The primary structure comprises 218 residues: Antifreeze protein Maxi (218 aa).

The first 23 residues, 1-23, serve as a signal peptide directing secretion; sequence MALSLFTVGQFIFLFWTISITEA.

The protein belongs to the type-I AFP family. Homodimer. As to expression, detected in blood serum (at protein level). Detected in liver.

The protein localises to the secreted. In terms of biological role, contributes to protect fish blood from freezing at subzero sea water temperatures. Lowers the blood freezing point by about 1.1 degrees at a concentration of 0.1 mg/ml, and by about 1.5 degrees at a concentration of 0.2 mg/ml. Binds to nascent ice crystals and prevents further growth. In Pseudopleuronectes americanus (Winter flounder), this protein is Antifreeze protein Maxi.